The chain runs to 847 residues: Collagen alpha-1(I) chain (847 aa).

A disordered region spans residues 1–847; that stretch reads GPMGPSGPRG…PGPIGPPGPR (847 aa). Residues 20 to 39 are compositionally biased toward low complexity; the sequence is PQGFQGPPGEPGEPGSSGPM. Positions 51-65 are enriched in basic and acidic residues; the sequence is NGDDGEAGKPGRPGE. The residue at position 85 (S85) is a Phosphoserine. Low complexity-rich tracts occupy residues 93-109 and 127-145; these read DAGPAGPKGEPGSPGEN and PGASGPAGARGNDGATGAA. Over residues 147 to 159 the composition is skewed to pro residues; that stretch reads PPGPTGPAGPPGF. 7 stretches are compositionally biased toward low complexity: residues 193–208, 219–228, 298–314, 334–343, 500–543, 551–599, and 628–638; these read AGAAGPAGNPGADGQP, QGPSGAPGPK, PKGITGSPGSPGPDGKT, PGPKGAAGEP, PSGP…KGDA, PTGA…NAGA, and SPGADGPAGAP. S501 is subject to Phosphoserine. Residues 685 to 695 are compositionally biased toward pro residues; it reads PPGPMGPPGIA. Residues 697–712 show a composition bias toward low complexity; it reads PPGESGREGSPGAEGS. A compositionally biased stretch (pro residues) spans 731-746; sequence SGPPGAPGAPGAPGPV. Low complexity predominate over residues 763 to 777; it reads AGPAGARGPSGPQGP. A compositionally biased stretch (basic and acidic residues) spans 778–789; sequence RGDKGETGEQGD. Low complexity predominate over residues 793-838; sequence SGIQGPPGAPGSPGEQGPSGASGPAGPRGPPGSAGSPGKDGINGIP.

The protein belongs to the fibrillar collagen family. As to quaternary structure, trimers of one alpha 2(I) and two alpha 1(I) chains. Post-translationally, prolines at the third position of the tripeptide repeating unit (G-X-Y) are hydroxylated in some or all of the chains. Forms the fibrils of tendon, ligaments and bones. In bones, the fibrils are mineralized with calcium hydroxyapatite.

The protein localises to the secreted. It localises to the extracellular space. The protein resides in the extracellular matrix. Type I collagen is a member of group I collagen (fibrillar forming collagen). The protein is Collagen alpha-1(I) chain of Cyclopes didactylus (Silky anteater).